Consider the following 209-residue polypeptide: Endoplasmic reticulum vesicle protein 25 (209 aa).

Residues 1 to 18 (MKYTTFGIISLFLSVTWA) form the signal peptide. Residues 19–178 (LRFELAASFE…TNESTNRRVR (160 aa)) are Lumenal-facing. The 89-residue stretch at 31 to 119 (PFCIRDFVEA…MRNVEVNIES (89 aa)) folds into the GOLD domain. A helical transmembrane segment spans residues 179 to 199 (NFSMAVIVVFAALCAWQLNYL). Topologically, residues 200-209 (KNYFRAKHII) are cytoplasmic.

The protein belongs to the EMP24/GP25L family.

The protein resides in the endoplasmic reticulum membrane. The protein localises to the golgi apparatus membrane. In terms of biological role, constituent of COPII-coated endoplasmic reticulum-derived transport vesicles. Required for efficient transport of a subset of secretory proteins to the Golgi. Facilitates retrograde transport from the Golgi to the endoplasmic reticulum. This chain is Endoplasmic reticulum vesicle protein 25 (ERV25), found in Eremothecium gossypii (strain ATCC 10895 / CBS 109.51 / FGSC 9923 / NRRL Y-1056) (Yeast).